The following is a 277-amino-acid chain: Methylglyoxal reductase DkgA (277 aa).

Tyrosine 51 functions as the Proton donor in the catalytic mechanism. A substrate-binding site is contributed by histidine 107. An NADP(+)-binding site is contributed by 187–241 (SPLAQGGKGVFDQEIIRKLAQQYNKTPAQIVIRWHLDSGLIVIPKSVTPARIREN).

The protein belongs to the aldo/keto reductase family. In terms of assembly, monomer.

It localises to the cytoplasm. The enzyme catalyses hydroxyacetone + NADP(+) = methylglyoxal + NADPH + H(+). Its function is as follows. Aldo-keto reductase that significantly contributes to cellular methylglyoxal detoxification by catalyzing the NADPH-dependent conversion of methylglyoxal to acetol. This chain is Methylglyoxal reductase DkgA, found in Yersinia pestis.